Consider the following 62-residue polypeptide: Photosystem II reaction center protein Z (62 aa).

Helical transmembrane passes span 8 to 28 (ALIG…VAYA) and 41 to 61 (WVGS…NFFV).

The protein belongs to the PsbZ family. In terms of assembly, PSII is composed of 1 copy each of membrane proteins PsbA, PsbB, PsbC, PsbD, PsbE, PsbF, PsbH, PsbI, PsbJ, PsbK, PsbL, PsbM, PsbT, PsbX, PsbY, PsbZ, Psb30/Ycf12, peripheral proteins PsbO, CyanoQ (PsbQ), PsbU, PsbV and a large number of cofactors. It forms dimeric complexes.

The protein localises to the cellular thylakoid membrane. Functionally, may control the interaction of photosystem II (PSII) cores with the light-harvesting antenna, regulates electron flow through the 2 photosystem reaction centers. PSII is a light-driven water plastoquinone oxidoreductase, using light energy to abstract electrons from H(2)O, generating a proton gradient subsequently used for ATP formation. The chain is Photosystem II reaction center protein Z from Nostoc punctiforme (strain ATCC 29133 / PCC 73102).